Consider the following 291-residue polypeptide: POU class 2 homeobox associating-factor 2 (291 aa).

The 23-residue stretch at 7-29 folds into the OCA domain; the sequence is KRVYQGVRVKHTVKDLLAEKRLR. Residues 176 to 219 form a disordered region; it reads AAPVADSPSLAGPDSGSSSPYRLTSGRSGSSIPSSSQPYTLQPL. Residues 200 to 211 show a composition bias toward low complexity; sequence SGRSGSSIPSSS.

This sequence belongs to the POU2AF family.

Functionally, transcriptional coactivator that may regulate cell type-specific differentiation pathways. This chain is POU class 2 homeobox associating-factor 2 (pou2af2), found in Danio rerio (Zebrafish).